The primary structure comprises 170 residues: Large ribosomal subunit protein bL9 (170 aa).

Positions 149–170 (RTEEADAEESAAEEPAVEEAAE) are disordered. The segment covering 153-170 (ADAEESAAEEPAVEEAAE) has biased composition (acidic residues).

It belongs to the bacterial ribosomal protein bL9 family.

In terms of biological role, binds to the 23S rRNA. This Oleidesulfovibrio alaskensis (strain ATCC BAA-1058 / DSM 17464 / G20) (Desulfovibrio alaskensis) protein is Large ribosomal subunit protein bL9.